The chain runs to 613 residues: Pentatricopeptide repeat-containing protein At2g02750 (613 aa).

15 PPR repeats span residues Asn-30–Val-64, Asp-65–Ser-99, Asn-101–Ser-126, Ser-128–Met-162, Glu-163–Lys-193, Ser-194–Glu-228, Asn-230–Phe-264, Glu-265–Thr-295, Asn-297–Pro-331, Asp-332–Pro-366, Ser-367–Arg-401, Asp-402–Lys-432, Asp-435–Pro-469, Ser-470–Glu-500, and Ser-506–Ser-539. A type E motif; degenerate region spans residues Val-540 to Gly-613.

Belongs to the PPR family. PCMP-E subfamily.

The sequence is that of Pentatricopeptide repeat-containing protein At2g02750 (PCMP-E22) from Arabidopsis thaliana (Mouse-ear cress).